A 230-amino-acid polypeptide reads, in one-letter code: Cytidylate kinase (230 aa).

Position 12 to 20 (12 to 20 (GPSGAGKGT)) interacts with ATP.

Belongs to the cytidylate kinase family. Type 1 subfamily.

Its subcellular location is the cytoplasm. The enzyme catalyses CMP + ATP = CDP + ADP. It carries out the reaction dCMP + ATP = dCDP + ADP. In Shewanella loihica (strain ATCC BAA-1088 / PV-4), this protein is Cytidylate kinase.